The chain runs to 476 residues: Glutamate--tRNA ligase (476 aa).

A 'HIGH' region motif is present at residues 9–19 (PSPTGTLHIGT). Positions 248 to 252 (KLSKR) match the 'KMSKS' region motif. Lys-251 is an ATP binding site.

This sequence belongs to the class-I aminoacyl-tRNA synthetase family. Glutamate--tRNA ligase type 1 subfamily. Monomer.

It is found in the cytoplasm. The catalysed reaction is tRNA(Glu) + L-glutamate + ATP = L-glutamyl-tRNA(Glu) + AMP + diphosphate. Functionally, catalyzes the attachment of glutamate to tRNA(Glu) in a two-step reaction: glutamate is first activated by ATP to form Glu-AMP and then transferred to the acceptor end of tRNA(Glu). This Prochlorococcus marinus (strain MIT 9303) protein is Glutamate--tRNA ligase.